Here is a 459-residue protein sequence, read N- to C-terminus: Vanillin aminotransferase (459 aa).

Pyridoxal 5'-phosphate-binding positions include 115-116 (GS) and Asp255. Position 284 is an N6-(pyridoxal phosphate)lysine (Lys284). Residue 320–321 (FT) coordinates pyridoxal 5'-phosphate. A coiled-coil region spans residues 428–459 (LSLEELDELIRIYGKALKDTEKRVEELKSQKK).

The protein belongs to the class-III pyridoxal-phosphate-dependent aminotransferase family. Expressed in placental tissue of immature fruit.

The catalysed reaction is vanillin + L-alanine = vanillylamine + pyruvate. Functionally, involved in the biosynthesis of capsaicinoids natural products, pungent alkaloids synthesized from phenylpropanoid intermediates in the placental tissue of chili pepper fruit acting as repellant on herbivorous mammals and conferring spiciness to hot peppers. Can transfer an amine from alanine to vanillin, forming vanillylamine and pyruvate. The protein is Vanillin aminotransferase of Capsicum frutescens (Cayenne pepper).